The chain runs to 184 residues: MQLKNLIFAAATAAALPATDAATNEPFGVISIHSGSGVQYAPINAALGSIFAGLKSQNASCSNPQDQTATFFLDDGALYLYDQSATPQELYVDRSGMGQGKIGYTTGAQPAPKNGERKGWSIDANNHLQFGGKDLIACPNSIEGAWSIWADAGVAKPGYNEGCEGIAARVEVSKNPNVCSYTSN.

The signal sequence occupies residues 1-21 (MQLKNLIFAAATAAALPATDA). Asparagine 58 carries an N-linked (GlcNAc...) asparagine glycan.

It belongs to the phiA family.

Its subcellular location is the secreted. It localises to the cell wall. In terms of biological role, cell wall protein involved in development of asexual structures such as phialide and conidium development, and thus required for spore formation. Plays a role as a general stress protectant produced by the fungus in competition with antagonistic bacteria. This is Cell wall protein phiA from Aspergillus niger (strain ATCC MYA-4892 / CBS 513.88 / FGSC A1513).